A 144-amino-acid polypeptide reads, in one-letter code: ASPVLDANGDPLVPGGQYYVLPHIWPGPGGLSFEKTGNQTCPVSVFQLPRLPLEQNNGKPLVFTPVSETDDINEDTAVEIAFAEPPSCAESGKWLIVNDFKEEYWSVGIGGPQDHEGYQTLTGYFKIHKVGSFAYMFSFLPFVR.

A glycan (N-linked (GlcNAc...) asparagine) is linked at asparagine 38. The cysteines at positions 41 and 88 are disulfide-linked.

It belongs to the leguminous Kunitz-type inhibitor family.

In terms of biological role, inhibitor of porcine pancreatic elastase with a Ki of 27 nM. Does not inhibit human neutrophil elastase, bovine trypsin, human plasma kallikrein or porcine pancreatic kallikrein. The sequence is that of Kunitz-type elastase inhibitor BrEI from Bauhinia rufa (Orchid tree).